Consider the following 516-residue polypeptide: Poly(U)-binding-splicing factor PUF60-B (516 aa).

RRM domains are found at residues 86 to 164 (CRVY…RPGS) and 183 to 261 (NRIY…KAVT). The segment at 356–398 (TAPASMGTPTSAVQLHTEVKREEDSRRTAEDHSAPVGNGQDSE) is disordered. Residues 372–388 (TEVKREEDSRRTAEDHS) are compositionally biased toward basic and acidic residues. The RRM 3; atypical domain maps to 419-506 (TVMVLRNMVG…RKVVAELYDQ (88 aa)).

Belongs to the RRM half pint family.

It is found in the nucleus. In terms of biological role, DNA- and RNA-binding protein, involved in transcription repression and pre-mRNA splicing. The polypeptide is Poly(U)-binding-splicing factor PUF60-B (puf60b) (Danio rerio (Zebrafish)).